Here is a 426-residue protein sequence, read N- to C-terminus: MNIISVGVNHKTAPIEIRERIALSEVQNKEFVTDLVSSGLASEAMVVSTCNRTELYVVPGMPEVNCDYLKDYIISYKDARNAVRPEHFFNRFYCGTARHLFEVSSAIDSLVLGEGQILGQVKDAYRIAAEVGTAGILLTRLCHTAFSVAKKVKTRTKLMEGAVSVSYAAVELAQKIFSNLSMKKVLLIGAGETGELAAKHMYAKNARNIVITNRTQSKAEALAEELGTNRVLPYESYKEHLHEFDIIITAVSTKEYILNAAEMQQSMAKRRLKPVIILDLGLPRNVDPEVGALQNMFLKDIDALKHIIDKNLERRRAELPKVKSIIDEELIGFGQWINTLKVRPTIVDLQSKFIEIKEKELERYRHKVSEEELKRMEHLTDRILKKILHHPIKMLKAPVDTADNIPSKVNLVRNIFDLEEPNQSLQ.

Residues 49–52, Ser109, 114–116, and Gln120 each bind substrate; these read TCNR and EGQ. The active-site Nucleophile is the Cys50. Position 189 to 194 (189 to 194) interacts with NADP(+); the sequence is GAGETG.

It belongs to the glutamyl-tRNA reductase family. As to quaternary structure, homodimer.

The enzyme catalyses (S)-4-amino-5-oxopentanoate + tRNA(Glu) + NADP(+) = L-glutamyl-tRNA(Glu) + NADPH + H(+). It participates in porphyrin-containing compound metabolism; protoporphyrin-IX biosynthesis; 5-aminolevulinate from L-glutamyl-tRNA(Glu): step 1/2. In terms of biological role, catalyzes the NADPH-dependent reduction of glutamyl-tRNA(Glu) to glutamate 1-semialdehyde (GSA). This Chlorobaculum parvum (strain DSM 263 / NCIMB 8327) (Chlorobium vibrioforme subsp. thiosulfatophilum) protein is Glutamyl-tRNA reductase (hemA).